The primary structure comprises 226 residues: DELTA-alicitoxin-Pse1b (226 aa).

The first 21 residues, 1 to 21 (MRHFVVFLYMFLALSIPTAFA), serve as a signal peptide directing secretion. The propeptide occupies 22-45 (KKHIVTKKGNHQDITNDNEGENAE). A plays an important role in the hemolytic activity region spans residues 50-59 (TVAGAVIAGG). Residues 58 to 77 (GGELALKILTKILYEIGKID) are N-terminal region. Serine 101, valine 134, serine 152, proline 154, tyrosine 180, and tyrosine 184 together coordinate phosphocholine. A trp-rich region, which is important for the binding to lipid membrane region spans residues 152–167 (SVPFDYNLYSNWWNVK).

Belongs to the actinoporin family. Sea anemone subfamily. Octamer or nonamer in membranes. Monomer in the soluble state.

The protein resides in the secreted. It is found in the nematocyst. It localises to the target cell membrane. Its function is as follows. Pore-forming protein that forms cations-selective hydrophilic pores of around 1 nm and causes cytolysis. Pore formation is a multi-step process that involves specific recognition of membrane sphingomyelin (but neither cholesterol nor phosphatidylcholine) using aromatic rich region and adjacent phosphocholine (POC) binding site, firm binding to the membrane (mainly driven by hydrophobic interactions) accompanied by the transfer of the N-terminal region to the lipid-water interface and finally pore formation after oligomerization of monomers. In Phyllodiscus semoni (Night anemone), this protein is DELTA-alicitoxin-Pse1b.